The sequence spans 189 residues: Peptidyl-tRNA hydrolase (189 aa).

Y14 is a tRNA binding site. The active-site Proton acceptor is the H19. TRNA is bound by residues Y64, N66, and N112.

The protein belongs to the PTH family. In terms of assembly, monomer.

It is found in the cytoplasm. It catalyses the reaction an N-acyl-L-alpha-aminoacyl-tRNA + H2O = an N-acyl-L-amino acid + a tRNA + H(+). In terms of biological role, hydrolyzes ribosome-free peptidyl-tRNAs (with 1 or more amino acids incorporated), which drop off the ribosome during protein synthesis, or as a result of ribosome stalling. Functionally, catalyzes the release of premature peptidyl moieties from peptidyl-tRNA molecules trapped in stalled 50S ribosomal subunits, and thus maintains levels of free tRNAs and 50S ribosomes. The polypeptide is Peptidyl-tRNA hydrolase (Finegoldia magna (strain ATCC 29328 / DSM 20472 / WAL 2508) (Peptostreptococcus magnus)).